Consider the following 139-residue polypeptide: Large ribosomal subunit protein uL16 (139 aa).

A compositionally biased stretch (basic residues) spans 1–16; it reads MLIPKRTKYRKQHRPD. Positions 1 to 23 are disordered; sequence MLIPKRTKYRKQHRPDRHGMSKG.

The protein belongs to the universal ribosomal protein uL16 family. As to quaternary structure, part of the 50S ribosomal subunit.

Its function is as follows. Binds 23S rRNA and is also seen to make contacts with the A and possibly P site tRNAs. The sequence is that of Large ribosomal subunit protein uL16 from Bifidobacterium animalis subsp. lactis (strain AD011).